A 479-amino-acid chain; its full sequence is Ribulose bisphosphate carboxylase large chain (479 aa).

Positions 1 to 2 are excised as a propeptide; that stretch reads MS. Asparagine 123 and threonine 173 together coordinate substrate. Lysine 175 acts as the Proton acceptor in catalysis. Lysine 177 provides a ligand contact to substrate. Mg(2+) is bound by residues lysine 201, aspartate 203, and glutamate 204. At lysine 201 the chain carries N6-carboxylysine. Serine 208 carries the post-translational modification Phosphoserine. The Proton acceptor role is filled by histidine 294. 2 residues coordinate substrate: arginine 295 and histidine 327. Threonine 330 carries the phosphothreonine modification. Serine 379 provides a ligand contact to substrate.

It belongs to the RuBisCO large chain family. Type I subfamily. Heterohexadecamer of 8 large chains and 8 small chains; disulfide-linked. The disulfide link is formed within the large subunit homodimers. It depends on Mg(2+) as a cofactor. The disulfide bond which can form in the large chain dimeric partners within the hexadecamer appears to be associated with oxidative stress and protein turnover.

It localises to the plastid. The protein localises to the chloroplast. It carries out the reaction 2 (2R)-3-phosphoglycerate + 2 H(+) = D-ribulose 1,5-bisphosphate + CO2 + H2O. The catalysed reaction is D-ribulose 1,5-bisphosphate + O2 = 2-phosphoglycolate + (2R)-3-phosphoglycerate + 2 H(+). RuBisCO catalyzes two reactions: the carboxylation of D-ribulose 1,5-bisphosphate, the primary event in carbon dioxide fixation, as well as the oxidative fragmentation of the pentose substrate in the photorespiration process. Both reactions occur simultaneously and in competition at the same active site. The sequence is that of Ribulose bisphosphate carboxylase large chain from Capsella bursa-pastoris (Shepherd's purse).